Consider the following 336-residue polypeptide: Ketol-acid reductoisomerase (NADP(+)) (336 aa).

Positions 1–181 (MNVYYDKDCN…GGGRTGIIET (181 aa)) constitute a KARI N-terminal Rossmann domain. Residues 24-27 (YGSQ), Arg-47, Ser-50, Ser-52, and 82-85 (DEFQ) each bind NADP(+). His-107 is a catalytic residue. Gly-133 serves as a coordination point for NADP(+). Positions 182–327 (TFQDETETDL…GKLRSMMPWI (146 aa)) constitute a KARI C-terminal knotted domain. Asp-190, Glu-194, Glu-226, and Glu-230 together coordinate Mg(2+). Ser-251 contacts substrate.

Belongs to the ketol-acid reductoisomerase family. Requires Mg(2+) as cofactor.

It catalyses the reaction (2R)-2,3-dihydroxy-3-methylbutanoate + NADP(+) = (2S)-2-acetolactate + NADPH + H(+). The enzyme catalyses (2R,3R)-2,3-dihydroxy-3-methylpentanoate + NADP(+) = (S)-2-ethyl-2-hydroxy-3-oxobutanoate + NADPH + H(+). Its pathway is amino-acid biosynthesis; L-isoleucine biosynthesis; L-isoleucine from 2-oxobutanoate: step 2/4. The protein operates within amino-acid biosynthesis; L-valine biosynthesis; L-valine from pyruvate: step 2/4. Involved in the biosynthesis of branched-chain amino acids (BCAA). Catalyzes an alkyl-migration followed by a ketol-acid reduction of (S)-2-acetolactate (S2AL) to yield (R)-2,3-dihydroxy-isovalerate. In the isomerase reaction, S2AL is rearranged via a Mg-dependent methyl migration to produce 3-hydroxy-3-methyl-2-ketobutyrate (HMKB). In the reductase reaction, this 2-ketoacid undergoes a metal-dependent reduction by NADPH to yield (R)-2,3-dihydroxy-isovalerate. The polypeptide is Ketol-acid reductoisomerase (NADP(+)) (Geotalea daltonii (strain DSM 22248 / JCM 15807 / FRC-32) (Geobacter daltonii)).